Consider the following 391-residue polypeptide: Terminal nucleotidyltransferase 5C (391 aa).

This sequence belongs to the TENT family. In terms of assembly, interacts with BCCIP and PABPC1; the interaction has no effect on TENT5C poly(A) polymerase function. Interacts with PLK4; this interaction leads to the TENT5C recruitment into the centrosome. As to expression, expressed by splenocytes, expression is increased in activated splenocytes.

Its subcellular location is the nucleus. The protein resides in the cytoplasm. It localises to the cytoskeleton. The protein localises to the microtubule organizing center. It is found in the centrosome. It catalyses the reaction RNA(n) + ATP = RNA(n)-3'-adenine ribonucleotide + diphosphate. Functionally, catalyzes the transfer of one adenosine molecule from an ATP to an mRNA poly(A) tail bearing a 3'-OH terminal group and enhances mRNA stability and gene expression. Can also elongate RNA oligos ending with uridine molecule, provided that the sequence is adenosine-rich. Mainly targets mRNAs encoding endoplasmic reticulum-targeted protein. The sequence is that of Terminal nucleotidyltransferase 5C from Mus musculus (Mouse).